We begin with the raw amino-acid sequence, 256 residues long: F-actin-capping protein subunit alpha (256 aa).

Position 31 is a phosphoserine (serine 31).

It belongs to the F-actin-capping protein alpha subunit family. Component of the F-actin capping complex, composed of a heterodimer of an alpha and a beta subunit.

Its subcellular location is the cytoplasm. It is found in the cytoskeleton. It localises to the actin patch. F-actin-capping proteins bind in a Ca(2+)-independent manner to the fast growing ends of actin filaments (barbed end) thereby blocking the exchange of subunits at these ends. Unlike other capping proteins (such as gelsolin and severin), these proteins do not sever actin filaments. Competes with formin cdc12 for attachment to the actin filaments barbed ends. Slowly replaces cdc12 on the barbed ends in preparation for filament disassembly during contractile ring constriction. The polypeptide is F-actin-capping protein subunit alpha (acp1) (Schizosaccharomyces pombe (strain 972 / ATCC 24843) (Fission yeast)).